The chain runs to 212 residues: Calaxin (212 aa).

EF-hand domains lie at 65-100, 101-136, and 146-181; these read TDDMIMDRVFRGFDKDNDGCISVSEWIHGLSLFLRG, TLDEKMKYCFEVFDLNGDGFISKEEMFHMLKNSLLK, and GIKDLVEITLKKMDHDHDGKLSFVDYEKAVREENLL. Residues D78, D80, D82, C84, E89, D114, N116, D118, E125, D159, D161, D163, K165, and D170 each coordinate Ca(2+).

Component of the outer dynein arm-docking complex along with ODAD1, ODAD2, ODAD3 and ODAD4.

It localises to the cytoplasm. Its subcellular location is the cytoskeleton. It is found in the cilium axoneme. The protein localises to the cell projection. The protein resides in the cilium. It localises to the flagellum. Its function is as follows. Component of the outer dynein arm-docking complex (ODA-DC) that mediates outer dynein arms (ODA) binding onto the doublet microtubule. Seems to regulate the assembly of both ODAs and their axonemal docking complex onto ciliary microtubules. Regulates ciliary and flagellar motility and is required for cilia-driven determination of body laterality. The polypeptide is Calaxin (Clxn) (Mus musculus (Mouse)).